Consider the following 1367-residue polypeptide: Protein patched homolog 3 (1367 aa).

The Cytoplasmic portion of the chain corresponds to 1–97; sequence MSFPDEETDL…WLFRIGCFVQ (97 aa). Residues 98 to 118 traverse the membrane as a helical segment; sequence RWAWSTIFISLFLYCLCLGGL. At 119–625 the chain is on the extracellular side; it reads RHVTIETDLV…IADMLEEFSQ (507 aa). Residues asparagine 235, asparagine 310, asparagine 454, and asparagine 591 are each glycosylated (N-linked (GlcNAc...) asparagine). The helical transmembrane segment at 626–646 threads the bilayer; sequence FNYIIIVIGYILMVIYAAFTQ. Positions 627–788 constitute an SSD domain; the sequence is NYIIIVIGYI…MFIFPAMIGI (162 aa). Over 647–659 the chain is Cytoplasmic; that stretch reads GRFQGWWLAVQSN. A helical membrane pass occupies residues 660 to 680; sequence VALAICGVILVTISSICGLGF. Residues 681 to 694 lie on the Extracellular side of the membrane; that stretch reads ATHLGINFNAATTQ. Residues 695-715 traverse the membrane as a helical segment; sequence VVPFLSLGLGIDDMFLLLHNY. At 716 to 737 the chain is on the cytoplasmic side; it reads DEIINICNKNEIGVLLKETGMS. The helical transmembrane segment at 738–758 threads the bilayer; the sequence is VMLTSINNILAFISGYVLPIP. The Extracellular segment spans residues 759–767; it reads ALRSFCSQT. The chain crosses the membrane as a helical span at residues 768–788; it reads AILLAFNLIFLMFIFPAMIGI. The Cytoplasmic portion of the chain corresponds to 789-863; it reads DLRRQRKGKR…KIYIPALKNN (75 aa). The chain crosses the membrane as a helical span at residues 864-884; it reads VVKACVLIGTTTAVVFGLYGM. Over 885-1143 the chain is Extracellular; the sequence is YTSTLGLELA…WEQYLTLRWN (259 aa). Residues 1144–1164 form a helical membrane-spanning segment; that stretch reads LFQAICIIALAVFCVISILMF. Over 1165–1171 the chain is Cytoplasmic; it reads NPWAATL. A helical membrane pass occupies residues 1172–1192; that stretch reads IMCIVVITTIELGGFMGLMGI. The Extracellular segment spans residues 1193 to 1199; sequence KMNPISA. The chain crosses the membrane as a helical span at residues 1200–1220; it reads VTLICAVGIGVEFTAHVELAF. Topologically, residues 1221 to 1237 are cytoplasmic; the sequence is LTALGTIDQRLESCLQH. A helical membrane pass occupies residues 1238 to 1258; that stretch reads MFVPVYHGAISTFLGVVMLVF. At 1259 to 1273 the chain is on the extracellular side; the sequence is SEFDFVVTYFFYTMT. A helical transmembrane segment spans residues 1274–1294; the sequence is LLVALGVFNGLCVLPVILTLV. Topologically, residues 1295-1367 are cytoplasmic; the sequence is GPKPELTPTD…SDDESSPAHK (73 aa). The disordered stretch occupies residues 1302-1367; it reads PTDGSSVLPP…SDDESSPAHK (66 aa). Residues 1346-1356 are compositionally biased toward low complexity; it reads RDSPSTSSASH.

This sequence belongs to the patched family. In terms of tissue distribution, in males, expressed in the precursor and mature sensory rays, the cloaca, and pre-anal ganglia and cephalic neurons. Also expressed in five cells in the valve region between the seminal vesicle and vas deferens of the somatic gonad.

The protein resides in the apical cell membrane. The protein localises to the cell junction. It localises to the adherens junction. Regulates osmosis during embryonic development. Required for larval development and in particular is involved in larval molting. This Caenorhabditis elegans protein is Protein patched homolog 3.